The primary structure comprises 214 residues: Pyridoxine/pyridoxamine 5'-phosphate oxidase (214 aa).

Residues 8-11 (RINY) and K66 each bind substrate. FMN is bound by residues 61-66 (RIVLVK), 76-77 (FT), R82, K83, and Q105. Substrate contacts are provided by Y123, R127, and S131. FMN-binding positions include 140-141 (QS) and W184. Substrate is bound at residue 190–192 (RLH). Residue R194 participates in FMN binding.

This sequence belongs to the pyridoxamine 5'-phosphate oxidase family. As to quaternary structure, homodimer. FMN is required as a cofactor.

It catalyses the reaction pyridoxamine 5'-phosphate + O2 + H2O = pyridoxal 5'-phosphate + H2O2 + NH4(+). The catalysed reaction is pyridoxine 5'-phosphate + O2 = pyridoxal 5'-phosphate + H2O2. The protein operates within cofactor metabolism; pyridoxal 5'-phosphate salvage; pyridoxal 5'-phosphate from pyridoxamine 5'-phosphate: step 1/1. It participates in cofactor metabolism; pyridoxal 5'-phosphate salvage; pyridoxal 5'-phosphate from pyridoxine 5'-phosphate: step 1/1. Functionally, catalyzes the oxidation of either pyridoxine 5'-phosphate (PNP) or pyridoxamine 5'-phosphate (PMP) into pyridoxal 5'-phosphate (PLP). The sequence is that of Pyridoxine/pyridoxamine 5'-phosphate oxidase from Burkholderia multivorans (strain ATCC 17616 / 249).